Reading from the N-terminus, the 122-residue chain is Large ribosomal subunit protein uL14 (122 aa).

This sequence belongs to the universal ribosomal protein uL14 family. In terms of assembly, part of the 50S ribosomal subunit. Forms a cluster with proteins L3 and L19. In the 70S ribosome, L14 and L19 interact and together make contacts with the 16S rRNA in bridges B5 and B8.

Binds to 23S rRNA. Forms part of two intersubunit bridges in the 70S ribosome. This Beutenbergia cavernae (strain ATCC BAA-8 / DSM 12333 / CCUG 43141 / JCM 11478 / NBRC 16432 / NCIMB 13614 / HKI 0122) protein is Large ribosomal subunit protein uL14.